Consider the following 247-residue polypeptide: Small ribosomal subunit protein uS3 (247 aa).

The KH type-2 domain maps to 51–119 (VAKRDKRPAG…ELHLNIVEIR (69 aa)). The span at 224–233 (PSAHDRRQQE) shows a compositional bias: basic and acidic residues. The interval 224 to 247 (PSAHDRRQQELQESGGASRPRRDR) is disordered.

It belongs to the universal ribosomal protein uS3 family. Part of the 30S ribosomal subunit. Forms a tight complex with proteins S10 and S14.

Functionally, binds the lower part of the 30S subunit head. Binds mRNA in the 70S ribosome, positioning it for translation. The polypeptide is Small ribosomal subunit protein uS3 (Jannaschia sp. (strain CCS1)).